Here is a 70-residue protein sequence, read N- to C-terminus: Large ribosomal subunit protein bL31 (70 aa).

Residues Cys16, Cys18, Cys37, and Cys40 each contribute to the Zn(2+) site.

The protein belongs to the bacterial ribosomal protein bL31 family. Type A subfamily. Part of the 50S ribosomal subunit. Requires Zn(2+) as cofactor.

In terms of biological role, binds the 23S rRNA. In Haemophilus influenzae (strain PittEE), this protein is Large ribosomal subunit protein bL31.